We begin with the raw amino-acid sequence, 406 residues long: Cysteine desulfurase (406 aa).

K226 carries the post-translational modification N6-(pyridoxal phosphate)lysine. The active-site Cysteine persulfide intermediate is the C364.

It belongs to the class-V pyridoxal-phosphate-dependent aminotransferase family. Csd subfamily. As to quaternary structure, homodimer. Interacts with SufE and the SufBCD complex composed of SufB, SufC and SufD. The interaction with SufE is required to mediate the direct transfer of the sulfur atom from the S-sulfanylcysteine. Pyridoxal 5'-phosphate is required as a cofactor.

The protein localises to the cytoplasm. It catalyses the reaction (sulfur carrier)-H + L-cysteine = (sulfur carrier)-SH + L-alanine. The catalysed reaction is L-selenocysteine + AH2 = hydrogenselenide + L-alanine + A + H(+). It functions in the pathway cofactor biosynthesis; iron-sulfur cluster biosynthesis. Cysteine desulfurases mobilize the sulfur from L-cysteine to yield L-alanine, an essential step in sulfur metabolism for biosynthesis of a variety of sulfur-containing biomolecules. Component of the suf operon, which is activated and required under specific conditions such as oxidative stress and iron limitation. Acts as a potent selenocysteine lyase in vitro, that mobilizes selenium from L-selenocysteine. Selenocysteine lyase activity is however unsure in vivo. The chain is Cysteine desulfurase from Salmonella gallinarum (strain 287/91 / NCTC 13346).